The sequence spans 132 residues: Fumarate reductase subunit C (132 aa).

A run of 3 helical transmembrane segments spans residues 36-56 (AIPT…LGSL), 70-90 (IVII…VTYY), and 110-130 (IITM…LVFM).

It belongs to the FrdC family. As to quaternary structure, part of an enzyme complex containing four subunits: a flavoprotein (FrdA), an iron-sulfur protein (FrdB), and two hydrophobic anchor proteins (FrdC and FrdD).

It is found in the cell inner membrane. Its function is as follows. Anchors the catalytic components of the fumarate reductase complex to the cell membrane, binds quinones. The chain is Fumarate reductase subunit C from Pasteurella multocida (strain Pm70).